Here is a 431-residue protein sequence, read N- to C-terminus: Alpha-gurjunene synthase (431 aa).

Mg(2+) contacts are provided by aspartate 126 and aspartate 130. Arginine 267 is a (2E,6E)-farnesyl diphosphate binding site. Asparagine 321 and serine 325 together coordinate Mg(2+). A (2E,6E)-farnesyl diphosphate-binding site is contributed by lysine 328. Glutamate 329 contributes to the Mg(2+) binding site. Residue 412-413 (RY) participates in (2E,6E)-farnesyl diphosphate binding.

The protein belongs to the terpene synthase family. It depends on Mg(2+) as a cofactor.

It catalyses the reaction (2E,6E)-farnesyl diphosphate = (-)-alpha-gurjunene + diphosphate. It carries out the reaction (2E,6E)-farnesyl diphosphate + H2O = 5-hydroxy-alpha-gurjunene + diphosphate. Its pathway is secondary metabolite biosynthesis; terpenoid biosynthesis. In terms of biological role, catalyzes the conversion of (2E,6E)-farnesyl diphosphate (FPP) into the sesquiterpene alcohols (-)-alpha-gurjunene and 5-hydroxy-alpha-gurjunene. Other unidentified sesquiterpene alcohols found to be catalyzed by MTPSL4 may arise from carbocation reaction intermediates along the catalytic cascade to gurjunene being quenched by a water molecule, yielding formation of the alcohols. This Marchantia polymorpha (Common liverwort) protein is Alpha-gurjunene synthase.